Here is a 221-residue protein sequence, read N- to C-terminus: GTP-binding nuclear protein Ran-3 (221 aa).

The Small GTPase Ran-type domain maps to 10–174 (DYPSFKLVIV…LYLARKLAGD (165 aa)). Residue 21–28 (DGGTGKTT) participates in GTP binding. The segment at 40–48 (KKYEPTIGV) is switch-I. GTP is bound by residues Gly-71, 125–128 (NKVD), and 153–155 (SAK). Residues 71-87 (GQEKFGGLRDGYYIHGQ) are switch-II. The disordered stretch occupies residues 201–221 (EAELAAAASQPLPDDDDDTFE).

The protein belongs to the small GTPase superfamily. Ran family. In terms of assembly, found in a nuclear export complex with RanGTP, exportin and pre-miRNA. Interacts with RanBP1a and RanBP1b. Interacts with KPNB1.

It localises to the nucleus. Its function is as follows. GTP-binding protein involved in nucleocytoplasmic transport. Required for the import of protein into the nucleus and also for RNA export. Involved in chromatin condensation and control of cell cycle. In Arabidopsis thaliana (Mouse-ear cress), this protein is GTP-binding nuclear protein Ran-3 (RAN3).